The following is a 308-amino-acid chain: Probable manganese-dependent inorganic pyrophosphatase (308 aa).

Mn(2+) is bound by residues His9, Asp13, Asp15, Asp75, His97, and Asp149.

It belongs to the PPase class C family. It depends on Mn(2+) as a cofactor.

It localises to the cytoplasm. It catalyses the reaction diphosphate + H2O = 2 phosphate + H(+). In Listeria innocua serovar 6a (strain ATCC BAA-680 / CLIP 11262), this protein is Probable manganese-dependent inorganic pyrophosphatase.